Reading from the N-terminus, the 168-residue chain is Chorismate pyruvate-lyase (168 aa).

Residues methionine 36, arginine 78, leucine 116, and glutamate 157 each contribute to the substrate site.

It belongs to the UbiC family. Monomer.

It localises to the cytoplasm. It carries out the reaction chorismate = 4-hydroxybenzoate + pyruvate. It participates in cofactor biosynthesis; ubiquinone biosynthesis. In terms of biological role, removes the pyruvyl group from chorismate, with concomitant aromatization of the ring, to provide 4-hydroxybenzoate (4HB) for the ubiquinone pathway. This Yersinia enterocolitica serotype O:8 / biotype 1B (strain NCTC 13174 / 8081) protein is Chorismate pyruvate-lyase.